Here is a 374-residue protein sequence, read N- to C-terminus: MSPPNQSLEGLPQEASNRSLNVTGAWDPEVLQALRISLVVVLSVITLATVLSNAFVLTTILLTKKLHTPANYLIGSLATTDLLVSILVMPISIAYTTTRTWNFGQILCDIWVSSDITCCTASILHLCVIALDRYWAITDALEYSKRRTAGHAAAMIAAVWIISICISIPPLFWRQATAHEEMSDCLVNTSQISYTIYSTCGAFYIPSILLIILYGRIYVAARSRILNPPSLYGKRFTTAQLITGSAGSSLCSLNPSLHESHTHTVGSPLFFNQVKIKLADSILERKRISAARERKATKTLGIILGAFIICWLPFFVVSLVLPICRDSCWIHPALFDFFTWLGYLNSLINPVIYTVFNEDFRQAFQKVVHFRKIS.

Residues 1-35 are Extracellular-facing; it reads MSPPNQSLEGLPQEASNRSLNVTGAWDPEVLQALR. 3 N-linked (GlcNAc...) asparagine glycosylation sites follow: Asn-5, Asn-17, and Asn-21. The helical transmembrane segment at 36 to 61 threads the bilayer; sequence ISLVVVLSVITLATVLSNAFVLTTIL. The Cytoplasmic segment spans residues 62-72; sequence LTKKLHTPANY. A helical membrane pass occupies residues 73 to 94; it reads LIGSLATTDLLVSILVMPISIA. Topologically, residues 95–106 are extracellular; it reads YTTTRTWNFGQI. Residues 107-131 traverse the membrane as a helical segment; that stretch reads LCDIWVSSDITCCTASILHLCVIAL. A disulfide bond links Cys-108 and Cys-185. Asp-115 and Cys-119 together coordinate serotonin. A DRY motif; important for ligand-induced conformation changes motif is present at residues 132–134; sequence DRY. Residues 132–151 are Cytoplasmic-facing; it reads DRYWAITDALEYSKRRTAGH. A helical membrane pass occupies residues 152–173; it reads AAAMIAAVWIISICISIPPLFW. At 174 to 191 the chain is on the extracellular side; it reads RQATAHEEMSDCLVNTSQ. The helical transmembrane segment at 192–215 threads the bilayer; the sequence is ISYTIYSTCGAFYIPSILLIILYG. At 216–297 the chain is on the cytoplasmic side; sequence RIYVAARSRI…ISAARERKAT (82 aa). The chain crosses the membrane as a helical span at residues 298–323; it reads KTLGIILGAFIICWLPFFVVSLVLPI. Ser-318 serves as a coordination point for serotonin. Residues 324–332 are Extracellular-facing; the sequence is CRDSCWIHP. A helical transmembrane segment spans residues 333-356; sequence ALFDFFTWLGYLNSLINPVIYTVF. Residues 349 to 353 carry the NPxxY motif; important for ligand-induced conformation changes and signaling motif; that stretch reads NPVIY. Topologically, residues 357–374 are cytoplasmic; it reads NEDFRQAFQKVVHFRKIS.

It belongs to the G-protein coupled receptor 1 family. As to quaternary structure, homodimer. Heterodimer with HTR1B. In terms of tissue distribution, detected in the motor column in spinal cord, and in several cranial motor nuclei, including nucleus ambiguous, oculomotoris, trochelaris and abducens. Detected in gamma motor neurons in the lumbar spinal cord. Detected in proprioceptive sensory neurons in dorsal root ganglia.

The protein localises to the cell membrane. G-protein coupled receptor for 5-hydroxytryptamine (serotonin). Also functions as a receptor for ergot alkaloid derivatives, various anxiolytic and antidepressant drugs and other psychoactive substances. Ligand binding causes a conformation change that triggers signaling via guanine nucleotide-binding proteins (G proteins) and modulates the activity of downstream effectors, such as adenylate cyclase. HTR1D is coupled to G(i)/G(o) G alpha proteins and mediates inhibitory neurotransmission by inhibiting adenylate cyclase activity. Regulates the release of 5-hydroxytryptamine in the brain, and thereby affects neural activity. May also play a role in regulating the release of other neurotransmitters. May play a role in vasoconstriction. The sequence is that of 5-hydroxytryptamine receptor 1D (Htr1d) from Mus musculus (Mouse).